The following is a 215-amino-acid chain: Cytochrome b6 (215 aa).

The helical transmembrane segment at 32–52 threads the bilayer; the sequence is IFYCLGGITLVCFLIQFATGF. Cys-35 contacts heme c. 2 residues coordinate heme b: His-86 and His-100. Transmembrane regions (helical) follow at residues 90–110, 116–136, and 186–206; these read ASMMVLMMILHVFRVYLTGGF, LTWVSGVILAVITVSFGVTGY, and AHTFVLPWLIAVFMLFHFLMI. 2 residues coordinate heme b: His-187 and His-202.

This sequence belongs to the cytochrome b family. PetB subfamily. In terms of assembly, the 4 large subunits of the cytochrome b6-f complex are cytochrome b6, subunit IV (17 kDa polypeptide, PetD), cytochrome f and the Rieske protein, while the 4 small subunits are PetG, PetL, PetM and PetN. The complex functions as a dimer. It depends on heme b as a cofactor. Heme c is required as a cofactor.

It localises to the cellular thylakoid membrane. In terms of biological role, component of the cytochrome b6-f complex, which mediates electron transfer between photosystem II (PSII) and photosystem I (PSI), cyclic electron flow around PSI, and state transitions. The polypeptide is Cytochrome b6 (Trichormus variabilis (strain ATCC 29413 / PCC 7937) (Anabaena variabilis)).